Reading from the N-terminus, the 484-residue chain is Phospholipase A1-Ialpha2, chloroplastic (484 aa).

A chloroplast-targeting transit peptide spans 1-63 (MALIQNPNMK…LAPVILNSPV (63 aa)). Positions 295–299 (GHSMG) match the GXSXG motif. S297 acts as the Acyl-ester intermediate in catalysis. Active-site charge relay system residues include D360 and H411.

It belongs to the AB hydrolase superfamily. Lipase family. In terms of tissue distribution, ubiquitous. Highest expression in flowers and leaves.

Its subcellular location is the plastid. It is found in the chloroplast. The protein localises to the plastoglobule. It carries out the reaction a 1,2-diacyl-3-O-[alpha-D-galactosyl-(1-&gt;6)-beta-D-galactosyl]-sn-glycerol + H2O = acyl-3-O-[alpha-D-galactosyl-(1-&gt;6)-beta-D-galactosyl]-sn-glycerol + a fatty acid + H(+). The catalysed reaction is a 1,2-diacyl-3-O-(beta-D-galactosyl)-sn-glycerol + H2O = an acyl-3-O-(beta-D-galactosyl)-sn-glycerol + a fatty acid + H(+). In terms of biological role, acylhydrolase that catalyzes the hydrolysis of phosphatidylcholine at the sn-1 position. Has a strong galactolipase activity toward monogalactosyldiacylglycerol (MGDG) and digalactosyldiacylglycerol (DGDG). Low triacylglycerol (TAG) lipase activity. Plays a role in plant growth and in leaf senescence. This is Phospholipase A1-Ialpha2, chloroplastic from Arabidopsis thaliana (Mouse-ear cress).